Consider the following 428-residue polypeptide: Tyrosine--tRNA ligase (428 aa).

An L-tyrosine-binding site is contributed by Y37. Residues 42–51 (PTGSSLHAGH) carry the 'HIGH' region motif. Y175 and Q179 together coordinate L-tyrosine. A 'KMSKS' region motif is present at residues 235–239 (KFGKS). K238 contacts ATP. Residues 358-415 (ATILDLLVESGLEKSKGAARRTVGEGGAYVNNQRIEDIEWSPSAEELLHGSWLVLRKG) enclose the S4 RNA-binding domain.

It belongs to the class-I aminoacyl-tRNA synthetase family. TyrS type 1 subfamily. As to quaternary structure, homodimer.

The protein resides in the cytoplasm. The enzyme catalyses tRNA(Tyr) + L-tyrosine + ATP = L-tyrosyl-tRNA(Tyr) + AMP + diphosphate + H(+). Its function is as follows. Catalyzes the attachment of tyrosine to tRNA(Tyr) in a two-step reaction: tyrosine is first activated by ATP to form Tyr-AMP and then transferred to the acceptor end of tRNA(Tyr). The polypeptide is Tyrosine--tRNA ligase (Corynebacterium jeikeium (strain K411)).